A 128-amino-acid polypeptide reads, in one-letter code: Sulfurtransferase TusD (128 aa).

Cys-78 acts as the Cysteine persulfide intermediate in catalysis.

It belongs to the DsrE/TusD family. As to quaternary structure, heterohexamer, formed by a dimer of trimers. The hexameric TusBCD complex contains 2 copies each of TusB, TusC and TusD. The TusBCD complex interacts with TusE.

It is found in the cytoplasm. In terms of biological role, part of a sulfur-relay system required for 2-thiolation of 5-methylaminomethyl-2-thiouridine (mnm(5)s(2)U) at tRNA wobble positions. Accepts sulfur from TusA and transfers it in turn to TusE. In Buchnera aphidicola subsp. Schizaphis graminum (strain Sg), this protein is Sulfurtransferase TusD.